Here is a 272-residue protein sequence, read N- to C-terminus: Phosphate import ATP-binding protein PstB (272 aa).

An ABC transporter domain is found at 26–267 (VAARNLNFYY…PADRRTQDYI (242 aa)). Residue 58 to 65 (GPSGCGKS) participates in ATP binding.

This sequence belongs to the ABC transporter superfamily. Phosphate importer (TC 3.A.1.7) family. The complex is composed of two ATP-binding proteins (PstB), two transmembrane proteins (PstC and PstA) and a solute-binding protein (PstS).

The protein localises to the cell inner membrane. It catalyses the reaction phosphate(out) + ATP + H2O = ADP + 2 phosphate(in) + H(+). Functionally, part of the ABC transporter complex PstSACB involved in phosphate import. Responsible for energy coupling to the transport system. In Nitrobacter hamburgensis (strain DSM 10229 / NCIMB 13809 / X14), this protein is Phosphate import ATP-binding protein PstB.